We begin with the raw amino-acid sequence, 396 residues long: Methylthioribose kinase (396 aa).

ATP-binding positions include Asn-44, Lys-61, and 115–117 (EDL). Substrate is bound at residue Asp-233. 250–252 (DPE) is a binding site for ATP. Arg-340 lines the substrate pocket.

It belongs to the methylthioribose kinase family. Homodimer.

It catalyses the reaction 5-(methylsulfanyl)-D-ribose + ATP = 5-(methylsulfanyl)-alpha-D-ribose 1-phosphate + ADP + H(+). Its pathway is amino-acid biosynthesis; L-methionine biosynthesis via salvage pathway; S-methyl-5-thio-alpha-D-ribose 1-phosphate from S-methyl-5'-thioadenosine (hydrolase route): step 2/2. Catalyzes the phosphorylation of methylthioribose into methylthioribose-1-phosphate. This chain is Methylthioribose kinase, found in Geobacillus thermodenitrificans (strain NG80-2).